The following is a 407-amino-acid chain: uncharacterized protein (407 aa).

This is an uncharacterized protein from Mycobacterium tuberculosis (strain CDC 1551 / Oshkosh).